A 367-amino-acid chain; its full sequence is UDP-N-acetylglucosamine--N-acetylmuramyl-(pentapeptide) pyrophosphoryl-undecaprenol N-acetylglucosamine transferase (367 aa).

UDP-N-acetyl-alpha-D-glucosamine contacts are provided by residues 15–17, asparagine 126, arginine 169, serine 197, and glutamine 298; that span reads TGG.

This sequence belongs to the glycosyltransferase 28 family. MurG subfamily.

It is found in the cell inner membrane. It carries out the reaction di-trans,octa-cis-undecaprenyl diphospho-N-acetyl-alpha-D-muramoyl-L-alanyl-D-glutamyl-meso-2,6-diaminopimeloyl-D-alanyl-D-alanine + UDP-N-acetyl-alpha-D-glucosamine = di-trans,octa-cis-undecaprenyl diphospho-[N-acetyl-alpha-D-glucosaminyl-(1-&gt;4)]-N-acetyl-alpha-D-muramoyl-L-alanyl-D-glutamyl-meso-2,6-diaminopimeloyl-D-alanyl-D-alanine + UDP + H(+). It functions in the pathway cell wall biogenesis; peptidoglycan biosynthesis. In terms of biological role, cell wall formation. Catalyzes the transfer of a GlcNAc subunit on undecaprenyl-pyrophosphoryl-MurNAc-pentapeptide (lipid intermediate I) to form undecaprenyl-pyrophosphoryl-MurNAc-(pentapeptide)GlcNAc (lipid intermediate II). The protein is UDP-N-acetylglucosamine--N-acetylmuramyl-(pentapeptide) pyrophosphoryl-undecaprenol N-acetylglucosamine transferase of Bradyrhizobium sp. (strain ORS 278).